Consider the following 172-residue polypeptide: Protein-export protein SecB (172 aa).

Residues 153 to 172 (AQGQGGDSGIVMPDGSQARH) are disordered.

The protein belongs to the SecB family. Homotetramer, a dimer of dimers. One homotetramer interacts with 1 SecA dimer.

It localises to the cytoplasm. Its function is as follows. One of the proteins required for the normal export of preproteins out of the cell cytoplasm. It is a molecular chaperone that binds to a subset of precursor proteins, maintaining them in a translocation-competent state. It also specifically binds to its receptor SecA. This is Protein-export protein SecB from Cupriavidus metallidurans (strain ATCC 43123 / DSM 2839 / NBRC 102507 / CH34) (Ralstonia metallidurans).